Here is a 210-residue protein sequence, read N- to C-terminus: Redox-sensing transcriptional repressor Rex (210 aa).

Positions 16–55 (IYSRYLRQLIEEGVETVSSGEIAAGVGVSSAQVRKDLAYF) form a DNA-binding region, H-T-H motif. 90 to 95 (GAGKLG) serves as a coordination point for NAD(+).

The protein belongs to the transcriptional regulatory Rex family. Homodimer.

The protein localises to the cytoplasm. Its function is as follows. Modulates transcription in response to changes in cellular NADH/NAD(+) redox state. This chain is Redox-sensing transcriptional repressor Rex, found in Syntrophomonas wolfei subsp. wolfei (strain DSM 2245B / Goettingen).